Reading from the N-terminus, the 228-residue chain is Thymidylate kinase (228 aa).

The segment covering 1–10 (MSDSAVQRSS) has biased composition (polar residues). Positions 1–23 (MSDSAVQRSSGRGRFITFEGGEG) are disordered. 20–27 (GGEGTGKS) lines the ATP pocket.

It belongs to the thymidylate kinase family.

It catalyses the reaction dTMP + ATP = dTDP + ADP. Its function is as follows. Phosphorylation of dTMP to form dTDP in both de novo and salvage pathways of dTTP synthesis. The sequence is that of Thymidylate kinase from Bradyrhizobium diazoefficiens (strain JCM 10833 / BCRC 13528 / IAM 13628 / NBRC 14792 / USDA 110).